The sequence spans 295 residues: Non-selective voltage-gated ion channel VDAC2 (295 aa).

ATP is bound by residues lysine 24 and lysine 32. Lysine 32 bears the N6-acetyllysine; alternate mark. Lysine 32 carries the N6-succinyllysine; alternate modification. Residue lysine 32 forms a Glycyl lysine isopeptide (Lys-Gly) (interchain with G-Cter in ubiquitin); alternate linkage. 2 beta stranded membrane passes run 38–47 (LVKLDVKTKS) and 51–59 (VEFSTSGSS). A Glycyl lysine isopeptide (Lys-Gly) (interchain with G-Cter in ubiquitin) cross-link involves residue lysine 65. Residues 66–76 (VSGTLETKYKW) form a beta stranded membrane-spanning segment. Tyrosine 79 carries the phosphotyrosine modification. The next 3 beta stranded transmembrane spans lie at 81–88 (LTFTEKWN), 92–101 (TLGTEIAIED), and 107–116 (LKLTFDTTFS). Position 119 is a phosphothreonine (threonine 119). Residue lysine 121 is modified to N6-acetyllysine; alternate. Lysine 121 participates in a covalent cross-link: Glycyl lysine isopeptide (Lys-Gly) (interchain with G-Cter in ubiquitin); alternate. Residue lysine 122 forms a Glycyl lysine isopeptide (Lys-Gly) (interchain with G-Cter in ubiquitin) linkage. 4 beta stranded membrane-spanning segments follow: residues 123–132 (SGKIKSAYKR), 135–142 (INLGCDVD), 149–157 (AIHGSAVFG), and 162–170 (LAGYQMTFD). Lysine 173 participates in a covalent cross-link: Glycyl lysine isopeptide (Lys-Gly) (interchain with G-Cter in ubiquitin). 6 beta stranded membrane-spanning segments follow: residues 175–187 (KLTRSNFAVGYRT), 190–197 (FQLHTNVN), 201–210 (EFGGSIYQKV), 214–223 (FDTSVNLAWT), 230–239 (RFGIAAKYQL), and 243–250 (ASISAKVN). Tyrosine 237 bears the Phosphotyrosine mark. The residue at position 252 (serine 252) is a Phosphoserine. NAD(+) contacts are provided by residues 254-256 (LIG) and 272-276 (SALVD). Transmembrane regions (beta stranded) follow at residues 254-263 (LIGVGYTQTL) and 266-275 (GVKLTLSALV). Lysine 278 is subject to N6-acetyllysine; alternate. Residue lysine 278 forms a Glycyl lysine isopeptide (Lys-Gly) (interchain with G-Cter in ubiquitin); alternate linkage. Residues 285–294 (HKLGLALELE) form a beta stranded membrane-spanning segment.

The protein belongs to the eukaryotic mitochondrial porin family. Monomer, homodimer and higher order oligomers; formation of higher order structures is necessary for scramblase activity. Interacts with ARMC12 in a TBC1D21-dependent manner. Interacts with KLC3. Interacts with SPATA33. Interacts with PPP3CC in a SPATA33-dependent manner. In terms of processing, ubiquitinated by PRKN during mitophagy, leading to its degradation and enhancement of mitophagy. Deubiquitinated by USP30. In terms of tissue distribution, highly expressed in heart, kidney, brain and ascitic tumor with very low levels in liver. Expressed in the head region of epididymal sperm.

It is found in the mitochondrion outer membrane. The protein resides in the membrane. The catalysed reaction is chloride(in) = chloride(out). It carries out the reaction K(+)(in) = K(+)(out). It catalyses the reaction a 1,2-diacyl-sn-glycero-3-phospho-L-serine(in) = a 1,2-diacyl-sn-glycero-3-phospho-L-serine(out). The enzyme catalyses a 1,2-diacyl-sn-glycero-3-phosphocholine(in) = a 1,2-diacyl-sn-glycero-3-phosphocholine(out). The catalysed reaction is a 1,2-diacyl-sn-glycero-3-phospho-(1D-myo-inositol)(in) = a 1,2-diacyl-sn-glycero-3-phospho-(1D-myo-inositol)(out). Non-selective voltage-gated ion channel that mediates the transport of anions and cations through the mitochondrion outer membrane and plasma membrane. The channel adopts an open conformation at zero mV and a closed conformation at both positive and negative potentials. There are two populations of channels; the main that functions in a lower open-state conductance with lower ion selectivity, that switch, in a voltage-dependent manner, from the open to a low-conducting 'closed' state and the other that has a normal ion selectivity in the typical high conductance, 'open' state. Binds various lipids, including the sphingolipid ceramide, the phospholipid phosphatidylcholine, and the sterols cholesterol and oxysterol. Binding of ceramide promotes the mitochondrial outer membrane permeabilization (MOMP) apoptotic pathway. In terms of biological role, catalyzes the scrambling of phospholipids across the outer mitochondrial membrane; the mechanism is unrelated to channel activity and is capable of translocating both anionic and zwitterionic phospholipids. This chain is Non-selective voltage-gated ion channel VDAC2, found in Rattus norvegicus (Rat).